Here is a 245-residue protein sequence, read N- to C-terminus: 3-dehydroquinate dehydratase (245 aa).

Residues 35-37 and Arg70 each bind 3-dehydroquinate; that span reads EFR. The Proton donor/acceptor role is filled by His132. Lys158 acts as the Schiff-base intermediate with substrate in catalysis. 3-dehydroquinate contacts are provided by Arg199, Thr220, and Gln224.

It belongs to the type-I 3-dehydroquinase family. As to quaternary structure, homodimer.

It catalyses the reaction 3-dehydroquinate = 3-dehydroshikimate + H2O. It functions in the pathway metabolic intermediate biosynthesis; chorismate biosynthesis; chorismate from D-erythrose 4-phosphate and phosphoenolpyruvate: step 3/7. Functionally, involved in the third step of the chorismate pathway, which leads to the biosynthesis of aromatic amino acids. Catalyzes the cis-dehydration of 3-dehydroquinate (DHQ) and introduces the first double bond of the aromatic ring to yield 3-dehydroshikimate. This chain is 3-dehydroquinate dehydratase, found in Haloquadratum walsbyi (strain DSM 16790 / HBSQ001).